A 95-amino-acid polypeptide reads, in one-letter code: uncharacterized protein (95 aa).

Positions 1–24 (MKKLATLTALAGALTMAVATAAQA) form a signal peptide, or 21. Positions 55 to 89 (EGKCGADKAKSAEGKCGEGKCGADKAKSAEGKCGE) are enriched in basic and acidic residues. The segment at 55–95 (EGKCGADKAKSAEGKCGEGKCGADKAKSAEGKCGEGKCGSK) is disordered.

This is an uncharacterized protein from Haemophilus influenzae (strain ATCC 51907 / DSM 11121 / KW20 / Rd).